We begin with the raw amino-acid sequence, 327 residues long: Phenylalanine--tRNA ligase alpha subunit (327 aa).

Mg(2+) is bound at residue Glu-252.

It belongs to the class-II aminoacyl-tRNA synthetase family. Phe-tRNA synthetase alpha subunit type 1 subfamily. Tetramer of two alpha and two beta subunits. The cofactor is Mg(2+).

It localises to the cytoplasm. The catalysed reaction is tRNA(Phe) + L-phenylalanine + ATP = L-phenylalanyl-tRNA(Phe) + AMP + diphosphate + H(+). The sequence is that of Phenylalanine--tRNA ligase alpha subunit from Shewanella oneidensis (strain ATCC 700550 / JCM 31522 / CIP 106686 / LMG 19005 / NCIMB 14063 / MR-1).